Consider the following 315-residue polypeptide: Apolipoprotein F (315 aa).

Positions 1–24 are cleaved as a signal peptide; sequence MHSLRLILMSIQLLCYLLLCPVDA. A propeptide spanning residues 25 to 154 is cleaved from the precursor; that stretch reads TSHGEATSVS…EQPGPKRAKR (130 aa).

Belongs to the apolipoprotein F family. In terms of tissue distribution, liver.

It is found in the secreted. In terms of biological role, minor apolipoprotein that associates with LDL. Inhibits cholesteryl ester transfer protein (CETP) activity and appears to be an important regulator of cholesterol transport. Also associates to a lesser degree with VLDL, Apo-AI and Apo-AII. The polypeptide is Apolipoprotein F (Apof) (Mus musculus (Mouse)).